The following is a 424-amino-acid chain: Adenylosuccinate synthetase (424 aa).

GTP contacts are provided by residues glycine 12–lysine 18 and glycine 40–threonine 42. Aspartate 13 functions as the Proton acceptor in the catalytic mechanism. Aspartate 13 and glycine 40 together coordinate Mg(2+). IMP contacts are provided by residues aspartate 13 to lysine 16, asparagine 38 to histidine 41, threonine 128, arginine 142, glutamine 223, threonine 238, and arginine 302. Histidine 41 serves as the catalytic Proton donor. Threonine 298 to arginine 304 lines the substrate pocket. GTP contacts are provided by residues arginine 304, histidine 330–aspartate 332, and glycine 412–glycine 414.

This sequence belongs to the adenylosuccinate synthetase family. As to quaternary structure, homodimer. Mg(2+) is required as a cofactor.

Its subcellular location is the cytoplasm. The catalysed reaction is IMP + L-aspartate + GTP = N(6)-(1,2-dicarboxyethyl)-AMP + GDP + phosphate + 2 H(+). Its pathway is purine metabolism; AMP biosynthesis via de novo pathway; AMP from IMP: step 1/2. In terms of biological role, plays an important role in the de novo pathway of purine nucleotide biosynthesis. Catalyzes the first committed step in the biosynthesis of AMP from IMP. The polypeptide is Adenylosuccinate synthetase (Acetivibrio thermocellus (strain ATCC 27405 / DSM 1237 / JCM 9322 / NBRC 103400 / NCIMB 10682 / NRRL B-4536 / VPI 7372) (Clostridium thermocellum)).